Consider the following 300-residue polypeptide: Ribonuclease HIII (300 aa).

The RNase H type-2 domain maps to 86-300; the sequence is RSRIGVDESG…FNEVLGSGNQ (215 aa). Positions 92, 93, and 196 each coordinate a divalent metal cation.

Belongs to the RNase HII family. RnhC subfamily. The cofactor is Mn(2+). Mg(2+) serves as cofactor.

The protein resides in the cytoplasm. It carries out the reaction Endonucleolytic cleavage to 5'-phosphomonoester.. Its function is as follows. Endonuclease that specifically degrades the RNA of RNA-DNA hybrids. The sequence is that of Ribonuclease HIII from Chlamydia trachomatis serovar L2 (strain ATCC VR-902B / DSM 19102 / 434/Bu).